The sequence spans 801 residues: Probable inorganic carbon transporter subunit DabA (801 aa).

Residues Cys332, Asp334, His500, and Cys515 each contribute to the Zn(2+) site.

It belongs to the inorganic carbon transporter (TC 9.A.2) DabA family. As to quaternary structure, forms a complex with DabB. Zn(2+) serves as cofactor.

Its subcellular location is the cell inner membrane. Functionally, part of an energy-coupled inorganic carbon pump. This Marinobacter nauticus (strain ATCC 700491 / DSM 11845 / VT8) (Marinobacter aquaeolei) protein is Probable inorganic carbon transporter subunit DabA.